Here is a 376-residue protein sequence, read N- to C-terminus: Probable dual-specificity RNA methyltransferase RlmN (376 aa).

Positions 1–25 (MSDSERTSLPLVFDEPRGRKKPPRH) are disordered. Glutamate 113 serves as the catalytic Proton acceptor. The 244-residue stretch at 119 to 362 (YPDRATMCVS…PTTVRDTRGR (244 aa)) folds into the Radical SAM core domain. Cysteine 126 and cysteine 368 are joined by a disulfide. [4Fe-4S] cluster is bound by residues cysteine 133, cysteine 137, and cysteine 140. S-adenosyl-L-methionine is bound by residues 188–189 (GE), serine 222, 245–247 (SLH), and asparagine 325. Cysteine 368 functions as the S-methylcysteine intermediate in the catalytic mechanism.

It belongs to the radical SAM superfamily. RlmN family. Requires [4Fe-4S] cluster as cofactor.

Its subcellular location is the cytoplasm. The enzyme catalyses adenosine(2503) in 23S rRNA + 2 reduced [2Fe-2S]-[ferredoxin] + 2 S-adenosyl-L-methionine = 2-methyladenosine(2503) in 23S rRNA + 5'-deoxyadenosine + L-methionine + 2 oxidized [2Fe-2S]-[ferredoxin] + S-adenosyl-L-homocysteine. It carries out the reaction adenosine(37) in tRNA + 2 reduced [2Fe-2S]-[ferredoxin] + 2 S-adenosyl-L-methionine = 2-methyladenosine(37) in tRNA + 5'-deoxyadenosine + L-methionine + 2 oxidized [2Fe-2S]-[ferredoxin] + S-adenosyl-L-homocysteine. Functionally, specifically methylates position 2 of adenine 2503 in 23S rRNA and position 2 of adenine 37 in tRNAs. The protein is Probable dual-specificity RNA methyltransferase RlmN of Nocardioides sp. (strain ATCC BAA-499 / JS614).